The following is a 418-amino-acid chain: Tyrosine--tRNA ligase (418 aa).

Tyrosine 34 serves as a coordination point for L-tyrosine. The short motif at proline 39 to histidine 48 is the 'HIGH' region element. 2 residues coordinate L-tyrosine: tyrosine 166 and glutamine 170. A 'KMSKS' region motif is present at residues lysine 228–threonine 232. Lysine 231 contributes to the ATP binding site. The S4 RNA-binding domain maps to threonine 350 to lysine 417.

Belongs to the class-I aminoacyl-tRNA synthetase family. TyrS type 1 subfamily. In terms of assembly, homodimer.

The protein localises to the cytoplasm. The enzyme catalyses tRNA(Tyr) + L-tyrosine + ATP = L-tyrosyl-tRNA(Tyr) + AMP + diphosphate + H(+). Its function is as follows. Catalyzes the attachment of tyrosine to tRNA(Tyr) in a two-step reaction: tyrosine is first activated by ATP to form Tyr-AMP and then transferred to the acceptor end of tRNA(Tyr). This is Tyrosine--tRNA ligase from Levilactobacillus brevis (Lactobacillus brevis).